Reading from the N-terminus, the 80-residue chain is RNA-binding protein Hfq (80 aa).

Positions 10 to 70 constitute a Sm domain; sequence DLFLNTVRKQ…ISTIMPGQPM (61 aa).

It belongs to the Hfq family. In terms of assembly, homohexamer.

In terms of biological role, RNA chaperone that binds small regulatory RNA (sRNAs) and mRNAs to facilitate mRNA translational regulation in response to envelope stress, environmental stress and changes in metabolite concentrations. Also binds with high specificity to tRNAs. The chain is RNA-binding protein Hfq from Rhizobium rhizogenes (strain K84 / ATCC BAA-868) (Agrobacterium radiobacter).